The chain runs to 697 residues: Methionine--tRNA ligase (697 aa).

Residues Pro12–His22 carry the 'HIGH' region motif. Residues Cys143, Cys146, Cys156, and Cys159 each coordinate Zn(2+). The 'KMSKS' region signature appears at Lys342–Ser346. Lys345 provides a ligand contact to ATP. The segment at Phe557–Val577 is disordered. In terms of domain architecture, tRNA-binding spans Asp591–Arg697.

It belongs to the class-I aminoacyl-tRNA synthetase family. MetG type 1 subfamily. As to quaternary structure, homodimer. Zn(2+) is required as a cofactor.

The protein resides in the cytoplasm. The enzyme catalyses tRNA(Met) + L-methionine + ATP = L-methionyl-tRNA(Met) + AMP + diphosphate. In terms of biological role, is required not only for elongation of protein synthesis but also for the initiation of all mRNA translation through initiator tRNA(fMet) aminoacylation. In Methylibium petroleiphilum (strain ATCC BAA-1232 / LMG 22953 / PM1), this protein is Methionine--tRNA ligase.